A 542-amino-acid polypeptide reads, in one-letter code: Chaperonin GroEL 2 (542 aa).

ATP is bound by residues 30 to 33 (TLGP), Lys51, 87 to 91 (DGTTT), Gly415, and Asp496.

It belongs to the chaperonin (HSP60) family. Forms a cylinder of 14 subunits composed of two heptameric rings stacked back-to-back. Interacts with the co-chaperonin GroES.

The protein resides in the cytoplasm. It carries out the reaction ATP + H2O + a folded polypeptide = ADP + phosphate + an unfolded polypeptide.. Functionally, together with its co-chaperonin GroES, plays an essential role in assisting protein folding. The GroEL-GroES system forms a nano-cage that allows encapsulation of the non-native substrate proteins and provides a physical environment optimized to promote and accelerate protein folding. This Mesorhizobium japonicum (strain LMG 29417 / CECT 9101 / MAFF 303099) (Mesorhizobium loti (strain MAFF 303099)) protein is Chaperonin GroEL 2.